Reading from the N-terminus, the 329-residue chain is 4-hydroxythreonine-4-phosphate dehydrogenase (329 aa).

Substrate contacts are provided by His-136 and Thr-137. 3 residues coordinate a divalent metal cation: His-166, His-211, and His-266. Substrate is bound by residues Lys-274, Asn-283, and Arg-292.

This sequence belongs to the PdxA family. As to quaternary structure, homodimer. Requires Zn(2+) as cofactor. Mg(2+) serves as cofactor. The cofactor is Co(2+).

It is found in the cytoplasm. It carries out the reaction 4-(phosphooxy)-L-threonine + NAD(+) = 3-amino-2-oxopropyl phosphate + CO2 + NADH. It functions in the pathway cofactor biosynthesis; pyridoxine 5'-phosphate biosynthesis; pyridoxine 5'-phosphate from D-erythrose 4-phosphate: step 4/5. In terms of biological role, catalyzes the NAD(P)-dependent oxidation of 4-(phosphooxy)-L-threonine (HTP) into 2-amino-3-oxo-4-(phosphooxy)butyric acid which spontaneously decarboxylates to form 3-amino-2-oxopropyl phosphate (AHAP). The sequence is that of 4-hydroxythreonine-4-phosphate dehydrogenase from Neisseria meningitidis serogroup B (strain ATCC BAA-335 / MC58).